An 855-amino-acid chain; its full sequence is Cytosolic phospholipase A2 zeta (855 aa).

One can recognise a C2 domain in the interval 27 to 145 (EKSEPQWKHR…QLGQPCTKNF (119 aa)). Ca(2+) is bound by residues D60, D66, D116, D118, and D123. Residues 304 to 855 (MSSSGDLDLR…RRQAGGRVGG (552 aa)) form the PLA2c domain. The Nucleophile role is filled by S393. The active-site Proton acceptor is the D685.

Ca(2+) is required as a cofactor. As to expression, strongly expressed in thyroid, expressed at intermediate level in stomach and at very low level in large intestine and prostate.

The protein localises to the cytoplasm. It is found in the cytosol. The protein resides in the cell membrane. It localises to the mitochondrion. The catalysed reaction is a 1,2-diacyl-sn-glycero-3-phosphocholine + H2O = a 1-acyl-sn-glycero-3-phosphocholine + a fatty acid + H(+). It carries out the reaction a 1-O-alkyl-2-acyl-sn-glycero-3-phosphocholine + H2O = a 1-O-alkyl-sn-glycero-3-phosphocholine + a fatty acid + H(+). The enzyme catalyses 1-hexadecanoyl-2-(9Z-octadecenoyl)-sn-glycero-3-phosphocholine + H2O = 2-(9Z-octadecenoyl)-sn-glycero-3-phosphocholine + hexadecanoate + H(+). It catalyses the reaction 1-hexadecanoyl-2-(9Z,12Z-octadecadienoyl)-sn-glycero-3-phosphocholine + H2O = (9Z,12Z)-octadecadienoate + 1-hexadecanoyl-sn-glycero-3-phosphocholine + H(+). The catalysed reaction is 1-hexadecanoyl-2-(5Z,8Z,11Z,14Z-eicosatetraenoyl)-sn-glycero-3-phosphocholine + H2O = 1-hexadecanoyl-sn-glycero-3-phosphocholine + (5Z,8Z,11Z,14Z)-eicosatetraenoate + H(+). It carries out the reaction 1-hexadecanoyl-2-(9Z,12Z-octadecadienoyl)-sn-glycero-3-phosphoethanolamine + H2O = 1-hexadecanoyl-sn-glycero-3-phosphoethanolamine + (9Z,12Z)-octadecadienoate + H(+). The enzyme catalyses 1-hexadecanoyl-2-(5Z,8Z,11Z,14Z-eicosatetraenoyl)-sn-glycero-3-phosphoethanolamine + H2O = 1-hexadecanoyl-sn-glycero-3-phosphoethanolamine + (5Z,8Z,11Z,14Z)-eicosatetraenoate + H(+). It catalyses the reaction 1-(5Z,8Z,11Z,14Z-eicosatetraenoyl)-2-O-hexadecyl-sn-glycero-3-phosphocholine + H2O = 2-O-hexadecyl-sn-glycero-3-phosphocholine + (5Z,8Z,11Z,14Z)-eicosatetraenoate + H(+). The catalysed reaction is 1-O-hexadecyl-2-(5Z,8Z,11Z,14Z)-eicosatetraenoyl-sn-glycero-3-phosphocholine + H2O = 1-O-hexadecyl-sn-glycero-3-phosphocholine + (5Z,8Z,11Z,14Z)-eicosatetraenoate + H(+). It carries out the reaction 1-hexadecanoyl-sn-glycero-3-phosphocholine + H2O = sn-glycerol 3-phosphocholine + hexadecanoate + H(+). With respect to regulation, stimulated by cytosolic Ca(2+). In terms of biological role, has calcium-dependent phospholipase and lysophospholipase activities with a potential role in membrane lipid remodeling and biosynthesis of lipid mediators. Preferentially hydrolyzes the ester bond of the fatty acyl group attached at sn-2 position of phospholipids (phospholipase A2 activity). Selectively hydrolyzes sn-2 arachidonoyl group from membrane phospholipids, providing the precursor for eicosanoid biosynthesis. In myocardial mitochondria, plays a major role in arachidonate release that is metabolically channeled to the formation of cardioprotective eicosanoids, epoxyeicosatrienoates (EETs). The sequence is that of Cytosolic phospholipase A2 zeta (Pla2g4f) from Mus musculus (Mouse).